A 221-amino-acid polypeptide reads, in one-letter code: Ribosomal RNA small subunit methyltransferase G (221 aa).

S-adenosyl-L-methionine-binding positions include Gly-90, Leu-95, 141 to 142 (VE), and Arg-154.

It belongs to the methyltransferase superfamily. RNA methyltransferase RsmG family.

The protein localises to the cytoplasm. The enzyme catalyses guanosine(527) in 16S rRNA + S-adenosyl-L-methionine = N(7)-methylguanosine(527) in 16S rRNA + S-adenosyl-L-homocysteine. In terms of biological role, specifically methylates the N7 position of guanine in position 527 of 16S rRNA. The protein is Ribosomal RNA small subunit methyltransferase G of Polaromonas naphthalenivorans (strain CJ2).